We begin with the raw amino-acid sequence, 224 residues long: Octanoyltransferase (224 aa).

Residues Pro29–Pro224 form the BPL/LPL catalytic domain. Residues Arg68 to His75, Ala157 to Gly159, and Gly170 to Ala172 contribute to the substrate site. Cys188 acts as the Acyl-thioester intermediate in catalysis.

The protein belongs to the LipB family.

It is found in the cytoplasm. It carries out the reaction octanoyl-[ACP] + L-lysyl-[protein] = N(6)-octanoyl-L-lysyl-[protein] + holo-[ACP] + H(+). The protein operates within protein modification; protein lipoylation via endogenous pathway; protein N(6)-(lipoyl)lysine from octanoyl-[acyl-carrier-protein]: step 1/2. Its function is as follows. Catalyzes the transfer of endogenously produced octanoic acid from octanoyl-acyl-carrier-protein onto the lipoyl domains of lipoate-dependent enzymes. Lipoyl-ACP can also act as a substrate although octanoyl-ACP is likely to be the physiological substrate. The chain is Octanoyltransferase from Methylibium petroleiphilum (strain ATCC BAA-1232 / LMG 22953 / PM1).